The following is a 623-amino-acid chain: Transcriptional activator of proteases prtT (623 aa).

Residues 50-79 (CHTCRKLKTRCDLDPRGHACRRCLSLRIDC) constitute a DNA-binding region (zn(2)-C6 fungal-type).

Belongs to the prtT family.

Its subcellular location is the nucleus. Transcription factor required for protein utilization and degradation. Regulates transcription of major secreted proteases. The sequence is that of Transcriptional activator of proteases prtT (prtT) from Aspergillus niger (strain ATCC MYA-4892 / CBS 513.88 / FGSC A1513).